We begin with the raw amino-acid sequence, 254 residues long: Putative epimerase LsrE (254 aa).

The chain crosses the membrane as a helical span at residues 14–34 (VALLASYPLSVGILAGQWIAL). A divalent metal cation is bound by residues His-50, Asp-52, and His-81. Asp-52 serves as the catalytic Proton acceptor. Residues His-81, 166–169 (GYGS), 199–201 (DGS), and 221–222 (GS) each bind substrate. Asp-199 is a binding site for a divalent metal cation. The Proton donor role is filled by Asp-199.

This sequence belongs to the ribulose-phosphate 3-epimerase family. The cofactor is a divalent metal cation.

The protein localises to the cell membrane. This Salmonella paratyphi A (strain ATCC 9150 / SARB42) protein is Putative epimerase LsrE (lsrE).